Consider the following 345-residue polypeptide: Annexin A9 (345 aa).

4 Annexin repeats span residues 41–112, 113–184, 197–266, and 270–341; these read FSAD…ALLQ, PAAH…ALAK, NLAA…NLAS, and NTPL…ALCR.

The protein belongs to the annexin family. As to quaternary structure, homodimer.

May act as a low affinity receptor for acetylcholine. The chain is Annexin A9 (ANXA9) from Bos taurus (Bovine).